A 285-amino-acid polypeptide reads, in one-letter code: Acetylglutamate kinase (285 aa).

Substrate contacts are provided by residues 64–65 (GG), arginine 86, and asparagine 181.

It belongs to the acetylglutamate kinase family. ArgB subfamily.

The protein localises to the cytoplasm. The catalysed reaction is N-acetyl-L-glutamate + ATP = N-acetyl-L-glutamyl 5-phosphate + ADP. Its pathway is amino-acid biosynthesis; L-arginine biosynthesis; N(2)-acetyl-L-ornithine from L-glutamate: step 2/4. Functionally, catalyzes the ATP-dependent phosphorylation of N-acetyl-L-glutamate. The chain is Acetylglutamate kinase from Clostridium beijerinckii (strain ATCC 51743 / NCIMB 8052) (Clostridium acetobutylicum).